Reading from the N-terminus, the 546-residue chain is Interleukin-20 receptor subunit alpha (546 aa).

Residues 1-32 form the signal peptide; that stretch reads MHTPGTPAPGHPDPPPLLLLTLLLLLAASGRA. At 33 to 253 the chain is on the extracellular side; it reads VPCVFCGLPK…EVQTSAWKAK (221 aa). 2 consecutive Fibronectin type-III domains span residues 42 to 138 and 139 to 245; these read KPTN…FLET and QVSP…TLEV. N-linked (GlcNAc...) asparagine glycosylation is found at Asn45, Asn86, Asn94, Asn185, and Asn203. Cys90 and Cys98 are oxidised to a cystine. Cys218 and Cys239 form a disulfide bridge. Residues 254-274 form a helical membrane-spanning segment; that stretch reads VIFWYVFLTSVIVFLFSAIGY. Residues 275-546 are Cytoplasmic-facing; that stretch reads LVYRYIHVGK…EWGLHVQMES (272 aa).

This sequence belongs to the type II cytokine receptor family. In terms of assembly, heterodimer with IL20RB and heterodimer with IL10RB.

It is found in the membrane. Functionally, the IL20RA/IL20RB dimer is a receptor for IL19, IL20 and IL24. The IL20RA/IL10RB dimer is a receptor for IL26. The polypeptide is Interleukin-20 receptor subunit alpha (Il20ra) (Mus musculus (Mouse)).